The primary structure comprises 76 residues: Acyl carrier protein (76 aa).

Positions 1–76 (MATFDDVKDV…AAVDYIDNNQ (76 aa)) constitute a Carrier domain. At S36 the chain carries O-(pantetheine 4'-phosphoryl)serine.

Belongs to the acyl carrier protein (ACP) family. In terms of processing, 4'-phosphopantetheine is transferred from CoA to a specific serine of apo-ACP by AcpS. This modification is essential for activity because fatty acids are bound in thioester linkage to the sulfhydryl of the prosthetic group.

It localises to the cytoplasm. It participates in lipid metabolism; fatty acid biosynthesis. In terms of biological role, carrier of the growing fatty acid chain in fatty acid biosynthesis. The polypeptide is Acyl carrier protein (Deinococcus radiodurans (strain ATCC 13939 / DSM 20539 / JCM 16871 / CCUG 27074 / LMG 4051 / NBRC 15346 / NCIMB 9279 / VKM B-1422 / R1)).